The following is a 553-amino-acid chain: Arginine--tRNA ligase (553 aa).

Residues 123 to 133 (ANPTGPLTIGR) carry the 'HIGH' region motif.

It belongs to the class-I aminoacyl-tRNA synthetase family. In terms of assembly, monomer.

The protein localises to the cytoplasm. It carries out the reaction tRNA(Arg) + L-arginine + ATP = L-arginyl-tRNA(Arg) + AMP + diphosphate. In Chlorobium phaeobacteroides (strain BS1), this protein is Arginine--tRNA ligase.